The sequence spans 423 residues: Phosphoribosylamine--glycine ligase (423 aa).

Positions 107–312 (KDLCARYDIP…LLPILYATAT (206 aa)) constitute an ATP-grasp domain. An ATP-binding site is contributed by 133–193 (VRAQGAPIVI…EAFLDGEEAS (61 aa)). Mg(2+)-binding residues include Glu282 and Asn284.

Belongs to the GARS family. Mg(2+) serves as cofactor. Requires Mn(2+) as cofactor.

It carries out the reaction 5-phospho-beta-D-ribosylamine + glycine + ATP = N(1)-(5-phospho-beta-D-ribosyl)glycinamide + ADP + phosphate + H(+). Its pathway is purine metabolism; IMP biosynthesis via de novo pathway; N(1)-(5-phospho-D-ribosyl)glycinamide from 5-phospho-alpha-D-ribose 1-diphosphate: step 2/2. The polypeptide is Phosphoribosylamine--glycine ligase (Agrobacterium fabrum (strain C58 / ATCC 33970) (Agrobacterium tumefaciens (strain C58))).